We begin with the raw amino-acid sequence, 208 residues long: Protein-L-isoaspartate O-methyltransferase (208 aa).

The active site involves serine 59.

This sequence belongs to the methyltransferase superfamily. L-isoaspartyl/D-aspartyl protein methyltransferase family.

It localises to the cytoplasm. The catalysed reaction is [protein]-L-isoaspartate + S-adenosyl-L-methionine = [protein]-L-isoaspartate alpha-methyl ester + S-adenosyl-L-homocysteine. In terms of biological role, catalyzes the methyl esterification of L-isoaspartyl residues in peptides and proteins that result from spontaneous decomposition of normal L-aspartyl and L-asparaginyl residues. It plays a role in the repair and/or degradation of damaged proteins. This is Protein-L-isoaspartate O-methyltransferase from Vibrio parahaemolyticus serotype O3:K6 (strain RIMD 2210633).